The primary structure comprises 107 residues: UPF0045 protein in glkA 3'region (107 aa).

This sequence belongs to the UPF0045 family.

This Staphylococcus xylosus protein is UPF0045 protein in glkA 3'region (dglA).